The sequence spans 491 residues: Transmembrane protein 39B (491 aa).

The tract at residues 1–56 is disordered; the sequence is MAGGRRGANRTTYCRSPLSNDTGSVGNGNHSTSSPVTGVRSRTRNGSGTGMSSPPL. N-linked (GlcNAc...) asparagine glycosylation is found at Asn9, Asn20, Asn29, and Asn45. 2 stretches are compositionally biased toward polar residues: residues 9–36 and 44–56; these read NRTTYCRSPLSNDTGSVGNGNHSTSSPV and RNGSGTGMSSPPL. The next 8 helical transmembrane spans lie at 79 to 99, 115 to 135, 152 to 172, 185 to 205, 290 to 310, 322 to 342, 423 to 443, and 449 to 469; these read LFELHLFACHLIALFVHYVNI, TSLNFHLIDYNMLVFTVIVLA, LSFPHSVFLVTARFAVLTLAG, TYSVLSLLFLCYPFGMYIPFF, EVLVSSMLSAYYVAFVPVWFV, CELFILVSVSTSVILMRHLLP, ILNILIILEGAMIFYQLYSLM, and HQTISLALILFSNYYAFFKLL.

The protein belongs to the TMEM39 family. As to expression, expressed in the ovary, followed by the intestine and brain.

The protein resides in the endoplasmic reticulum membrane. Functionally, may protect the cells against DNA damage caused by exposure to the cold-warming stress and facilitates tissue damage repair during the recovery phase. This Danio rerio (Zebrafish) protein is Transmembrane protein 39B.